The chain runs to 65 residues: Large ribosomal subunit protein uL29 (65 aa).

It belongs to the universal ribosomal protein uL29 family.

This Desulforapulum autotrophicum (strain ATCC 43914 / DSM 3382 / VKM B-1955 / HRM2) (Desulfobacterium autotrophicum) protein is Large ribosomal subunit protein uL29.